A 61-amino-acid polypeptide reads, in one-letter code: Small ribosomal subunit protein uS14 (61 aa).

4 residues coordinate Zn(2+): C24, C27, C40, and C43.

This sequence belongs to the universal ribosomal protein uS14 family. Zinc-binding uS14 subfamily. Part of the 30S ribosomal subunit. Contacts proteins S3 and S10. Requires Zn(2+) as cofactor.

Functionally, binds 16S rRNA, required for the assembly of 30S particles and may also be responsible for determining the conformation of the 16S rRNA at the A site. In Thermosipho melanesiensis (strain DSM 12029 / CIP 104789 / BI429), this protein is Small ribosomal subunit protein uS14.